Consider the following 131-residue polypeptide: Translation initiation factor 5A (131 aa).

Lys-36 is modified (hypusine).

The protein belongs to the eIF-5A family.

Its subcellular location is the cytoplasm. In terms of biological role, functions by promoting the formation of the first peptide bond. This chain is Translation initiation factor 5A (eIF5A), found in Metallosphaera sedula (strain ATCC 51363 / DSM 5348 / JCM 9185 / NBRC 15509 / TH2).